A 64-amino-acid polypeptide reads, in one-letter code: Large ribosomal subunit protein uL29 (64 aa).

The protein belongs to the universal ribosomal protein uL29 family.

The chain is Large ribosomal subunit protein uL29 from Lacticaseibacillus paracasei (strain ATCC 334 / BCRC 17002 / CCUG 31169 / CIP 107868 / KCTC 3260 / NRRL B-441) (Lactobacillus paracasei).